Consider the following 394-residue polypeptide: Putative bacilysin exporter BacE (394 aa).

11 helical membrane-spanning segments follow: residues 11 to 31 (LLYGQALSFMGDYCVLPALLI), 43 to 63 (SGVIVVRSIPMVFQPFLGVLV), 69 to 89 (IKIMLWTDIIRGIIFLGLTFL), 92 to 112 (GEYPLIFLALLFITYGSGVFF), 142 to 162 (IIVGAAAGGLFLLGGSVELAV), 166 to 186 (GVTYLVSAFFISRIKLQFVPI), 215 to 235 (MFTMITMALLWGVVYSYFPIV), 244 to 264 (IGNFILTFCIGFGGFIGAALV), 288 to 308 (LFLFTPIFAVSVIAAILFFIA), 332 to 352 (IFSVAEASIGLCISIGSMFIN), and 353 to 373 (ILSAPVIMGLIVVIVCGLFLH).

This sequence belongs to the major facilitator superfamily. Drug:H(+) antiporter-3 (DHA3) (TC 2.A.1.21) family.

Its subcellular location is the cell membrane. Part of the bacilysin biosynthesis operon. May be involved in self-resistance to bacilysin by permitting efflux of this antibiotic. The polypeptide is Putative bacilysin exporter BacE (bacE) (Bacillus subtilis (strain 168)).